Reading from the N-terminus, the 314-residue chain is Dihydroorotate dehydrogenase (fumarate) (314 aa).

Substrate is bound by residues Lys46, 70–74 (NSMGL), and Asn130. 46–47 (KS) contributes to the FMN binding site. Asn130 is a binding site for FMN. Active-site nucleophile residues include Ser132 and Cys133. FMN contacts are provided by Lys167 and Ile195. 196 to 197 (NS) contributes to the substrate binding site. Residues Gly224, 252–253 (GG), and 274–275 (GT) contribute to the FMN site.

This sequence belongs to the dihydroorotate dehydrogenase family. Type 1 subfamily. Homodimer. FMN serves as cofactor.

Its subcellular location is the cytoplasm. It catalyses the reaction (S)-dihydroorotate + fumarate = orotate + succinate. It participates in pyrimidine metabolism; UMP biosynthesis via de novo pathway. Catalyzes the conversion of dihydroorotate to orotate with fumarate as the electron acceptor. This is Dihydroorotate dehydrogenase (fumarate) (URA1) from Saccharomyces paradoxus (Yeast).